We begin with the raw amino-acid sequence, 420 residues long: Serine--tRNA ligase (420 aa).

229 to 231 contacts L-serine; sequence TAE. 260–262 contributes to the ATP binding site; sequence RSE. Glu-283 is an L-serine binding site. 347–350 serves as a coordination point for ATP; it reads EISS. Ser-381 contributes to the L-serine binding site.

It belongs to the class-II aminoacyl-tRNA synthetase family. Type-1 seryl-tRNA synthetase subfamily. As to quaternary structure, homodimer. The tRNA molecule binds across the dimer.

Its subcellular location is the cytoplasm. It carries out the reaction tRNA(Ser) + L-serine + ATP = L-seryl-tRNA(Ser) + AMP + diphosphate + H(+). The catalysed reaction is tRNA(Sec) + L-serine + ATP = L-seryl-tRNA(Sec) + AMP + diphosphate + H(+). Its pathway is aminoacyl-tRNA biosynthesis; selenocysteinyl-tRNA(Sec) biosynthesis; L-seryl-tRNA(Sec) from L-serine and tRNA(Sec): step 1/1. In terms of biological role, catalyzes the attachment of serine to tRNA(Ser). Is also able to aminoacylate tRNA(Sec) with serine, to form the misacylated tRNA L-seryl-tRNA(Sec), which will be further converted into selenocysteinyl-tRNA(Sec). This Gluconobacter oxydans (strain 621H) (Gluconobacter suboxydans) protein is Serine--tRNA ligase.